The chain runs to 176 residues: Tubulin polymerization-promoting protein family member 3 (176 aa).

A2 is subject to N-acetylalanine.

Belongs to the TPPP family.

It localises to the cytoplasm. The protein resides in the cytoskeleton. Its function is as follows. Regulator of microtubule dynamic that has microtubule bundling activity. Required for embryo implantation; possibly by regulating beta-catenin. Also required for decidualization via regulation of beta-catenin. This Rattus norvegicus (Rat) protein is Tubulin polymerization-promoting protein family member 3 (Tppp3).